We begin with the raw amino-acid sequence, 271 residues long: 3-methyl-2-oxobutanoate hydroxymethyltransferase (271 aa).

The Mg(2+) site is built by D52 and D91. Residues 52–53, D91, and K121 each bind 3-methyl-2-oxobutanoate; that span reads DS. E123 is a binding site for Mg(2+). The active-site Proton acceptor is E189.

Belongs to the PanB family. Homodecamer; pentamer of dimers. It depends on Mg(2+) as a cofactor.

Its subcellular location is the cytoplasm. The catalysed reaction is 3-methyl-2-oxobutanoate + (6R)-5,10-methylene-5,6,7,8-tetrahydrofolate + H2O = 2-dehydropantoate + (6S)-5,6,7,8-tetrahydrofolate. The protein operates within cofactor biosynthesis; (R)-pantothenate biosynthesis; (R)-pantoate from 3-methyl-2-oxobutanoate: step 1/2. In terms of biological role, catalyzes the reversible reaction in which hydroxymethyl group from 5,10-methylenetetrahydrofolate is transferred onto alpha-ketoisovalerate to form ketopantoate. This chain is 3-methyl-2-oxobutanoate hydroxymethyltransferase, found in Acidothermus cellulolyticus (strain ATCC 43068 / DSM 8971 / 11B).